Here is a 99-residue protein sequence, read N- to C-terminus: PqqA binding protein (99 aa).

It belongs to the PqqD family. In terms of assembly, monomer. Interacts with PqqE.

Its pathway is cofactor biosynthesis; pyrroloquinoline quinone biosynthesis. In terms of biological role, functions as a PqqA binding protein and presents PqqA to PqqE, in the pyrroloquinoline quinone (PQQ) biosynthetic pathway. This chain is PqqA binding protein, found in Acinetobacter baylyi (strain ATCC 33305 / BD413 / ADP1).